A 130-amino-acid polypeptide reads, in one-letter code: Small ribosomal subunit protein uS9 (130 aa).

The tract at residues 98 to 130 (LKRAGMLTRDPRMKERKKPGLKGARRSPQFSKR) is disordered. Positions 111–130 (KERKKPGLKGARRSPQFSKR) are enriched in basic residues.

The protein belongs to the universal ribosomal protein uS9 family.

The chain is Small ribosomal subunit protein uS9 from Macrococcus caseolyticus (strain JCSC5402) (Macrococcoides caseolyticum).